The sequence spans 96 residues: Phosphoribosyl-ATP pyrophosphatase (96 aa).

It belongs to the PRA-PH family.

It localises to the cytoplasm. The catalysed reaction is 1-(5-phospho-beta-D-ribosyl)-ATP + H2O = 1-(5-phospho-beta-D-ribosyl)-5'-AMP + diphosphate + H(+). It participates in amino-acid biosynthesis; L-histidine biosynthesis; L-histidine from 5-phospho-alpha-D-ribose 1-diphosphate: step 2/9. This chain is Phosphoribosyl-ATP pyrophosphatase, found in Methanococcus maripaludis (strain DSM 14266 / JCM 13030 / NBRC 101832 / S2 / LL).